An 89-amino-acid polypeptide reads, in one-letter code: Small ribosomal subunit protein uS15 (89 aa).

This sequence belongs to the universal ribosomal protein uS15 family. Part of the 30S ribosomal subunit. Forms a bridge to the 50S subunit in the 70S ribosome, contacting the 23S rRNA.

In terms of biological role, one of the primary rRNA binding proteins, it binds directly to 16S rRNA where it helps nucleate assembly of the platform of the 30S subunit by binding and bridging several RNA helices of the 16S rRNA. Forms an intersubunit bridge (bridge B4) with the 23S rRNA of the 50S subunit in the ribosome. The polypeptide is Small ribosomal subunit protein uS15 (Escherichia coli O139:H28 (strain E24377A / ETEC)).